A 309-amino-acid chain; its full sequence is Genome polyprotein (309 aa).

The Cytoplasmic portion of the chain corresponds to 1-40; it reads GFADLMGYIPLVGAPLGGAARALAHGVRVLEDGVNYATGN. Residues 36-39 form an important for lipid droplets localization region; it reads YATG. Residues 41 to 61 traverse the membrane as a helical segment; the sequence is LPGCSFSIFLLALLSCLTVPA. The propeptide at 50–63 is ER anchor for the core protein, removed in mature form by host signal peptidase; sequence LLALLSCLTVPASA. Residues 62–230 lie on the Lumenal side of the membrane; the sequence is SAYQVRNSSG…AGAHWGVLAG (169 aa). 3 N-linked (GlcNAc...) asparagine; by host glycosylation sites follow: Asn-68, Asn-81, and Asn-106. The important for fusion stretch occupies residues 137–168; that stretch reads LVGSATLCSALYVGDLCGSVFLVGQLFTFSPR. A glycan (N-linked (GlcNAc...) asparagine; by host) is linked at Asn-177. Residues 231–251 form a helical membrane-spanning segment; that stretch reads IAYFSMVGNWAKVLVVLLLFA. Over 252–309 the chain is Lumenal; that stretch reads GVDATTYTTGGNAARTTQALTSFFSPGAKQDIQLINTNGSWHINRTALNCNASLDTGW. Positions 256-282 are HVR1; sequence TTYTTGGNAARTTQALTSFFSPGAKQD. Residues Asn-289, Asn-295, and Asn-302 are each glycosylated (N-linked (GlcNAc...) (high mannose) asparagine; by host).

This sequence belongs to the hepacivirus polyprotein family. In terms of assembly, homooligomer. Interacts with E1 (via C-terminus). Interacts with the non-structural protein 5A. Interacts (via N-terminus) with host STAT1 (via SH2 domain); this interaction results in decreased STAT1 phosphorylation and ubiquitin-mediated proteasome-dependent STAT1 degradation, leading to decreased IFN-stimulated gene transcription. Interacts with host STAT3; this interaction constitutively activates STAT3. Interacts with host LTBR receptor. Interacts with host TNFRSF1A receptor and possibly induces apoptosis. Interacts with host HNRPK. Interacts with host YWHAE. Interacts with host UBE3A/E6AP. Interacts with host DDX3X. Interacts with host APOA2. Interacts with host RXRA protein. Interacts with host SP110 isoform 3/Sp110b; this interaction sequesters the transcriptional corepressor SP110 away from the nucleus. Interacts with host CREB3 nuclear transcription protein; this interaction triggers cell transformation. Interacts with host ACY3. Interacts with host C1QR1. Interacts with host RBM24; this interaction, which enhances the interaction of the mature core protein with 5'-UTR, may inhibit viral translation and favor replication. Interacts with host EIF2AK2/PKR; this interaction induces the autophosphorylation of EIF2AK2. Part of the viral assembly initiation complex composed of NS2, E1, E2, NS3, NS4A, NS5A and the mature core protein. Forms a heterodimer with envelope glycoprotein E2. Interacts with mature core protein. Interacts with protease NS2. The heterodimer E1/E2 interacts with host CLDN1; this interaction plays a role in viral entry into host cell. Interacts with host SPSB2 (via C-terminus). Part of the viral assembly initiation complex composed of NS2, E1, E2, NS3, NS4A, NS5A and the mature core protein. As to quaternary structure, forms a heterodimer with envelope glycoprotein E1. Interacts with host CD81 and SCARB1 receptors; these interactions play a role in viral entry into host cell. Interacts with host EIF2AK2/PKR; this interaction inhibits EIF2AK2 and probably allows the virus to evade the innate immune response. Interacts with host CD209/DC-SIGN and CLEC4M/DC-SIGNR. Interact with host SPCS1; this interaction is essential for viral particle assembly. Interacts with protease NS2. The heterodimer E1/E2 interacts with host CLDN1; this interaction plays a role in viral entry into host cell. Part of the viral assembly initiation complex composed of NS2, E1, E2, NS3, NS4A, NS5A and the mature core protein. Specific enzymatic cleavages in vivo yield mature proteins. The structural proteins, core, E1, E2 and p7 are produced by proteolytic processing by host signal peptidases. The core protein precursor is synthesized as a 23 kDa, which is retained in the ER membrane through the hydrophobic signal peptide. Cleavage by the signal peptidase releases the 21 kDa mature core protein. The cleavage of the core protein precursor occurs between aminoacids 176 and 188 but the exact cleavage site is not known. Some degraded forms of the core protein appear as well during the course of infection. The other proteins (p7, NS2, NS3, NS4A, NS4B, NS5A and NS5B) are cleaved by the viral proteases. Autoprocessing between NS2 and NS3 is mediated by the NS2 cysteine protease catalytic domain and regulated by the NS3 N-terminal domain. Post-translationally, phosphorylated by host PKC and PKA. In terms of processing, ubiquitinated; mediated by UBE3A and leading to core protein subsequent proteasomal degradation. Highly N-glycosylated.

The protein resides in the host endoplasmic reticulum membrane. It localises to the host mitochondrion membrane. It is found in the virion. The protein localises to the host cytoplasm. Its subcellular location is the host nucleus. The protein resides in the host lipid droplet. It localises to the virion membrane. Functionally, packages viral RNA to form a viral nucleocapsid, and promotes virion budding. Participates in the viral particle production as a result of its interaction with the non-structural protein 5A. Binds RNA and may function as a RNA chaperone to induce the RNA structural rearrangements taking place during virus replication. Modulates viral translation initiation by interacting with viral IRES and 40S ribosomal subunit. Affects various cell signaling pathways, host immunity and lipid metabolism. Prevents the establishment of cellular antiviral state by blocking the interferon-alpha/beta (IFN-alpha/beta) and IFN-gamma signaling pathways and by blocking the formation of phosphorylated STAT1 and promoting ubiquitin-mediated proteasome-dependent degradation of STAT1. Activates STAT3 leading to cellular transformation. Regulates the activity of cellular genes, including c-myc and c-fos. May repress the promoter of p53, and sequester CREB3 and SP110 isoform 3/Sp110b in the cytoplasm. Represses cell cycle negative regulating factor CDKN1A, thereby interrupting an important check point of normal cell cycle regulation. Targets transcription factors involved in the regulation of inflammatory responses and in the immune response: suppresses TNF-induced NF-kappa-B activation, and activates AP-1. Binds to dendritic cells (DCs) via C1QR1, resulting in down-regulation of T-lymphocytes proliferation. Alters lipid metabolism by interacting with hepatocellular proteins involved in lipid accumulation and storage. Induces up-regulation of FAS promoter activity, and thereby contributes to the increased triglyceride accumulation in hepatocytes (steatosis). Forms a heterodimer with envelope glycoprotein E2, which mediates virus attachment to the host cell, virion internalization through clathrin-dependent endocytosis and fusion with host membrane. Fusion with the host cell is most likely mediated by both E1 and E2, through conformational rearrangements of the heterodimer required for fusion rather than a classical class II fusion mechanism. E1/E2 heterodimer binds host apolipoproteins such as APOB and ApoE thereby forming a lipo-viro-particle (LVP). APOE associated to the LVP allows the initial virus attachment to cell surface receptors such as the heparan sulfate proteoglycans (HSPGs), syndecan-1 (SDC1), syndecan-1 (SDC2), the low-density lipoprotein receptor (LDLR) and scavenger receptor class B type I (SCARB1). The cholesterol transfer activity of SCARB1 allows E2 exposure and binding of E2 to SCARB1 and the tetraspanin CD81. E1/E2 heterodimer binding on CD81 activates the epithelial growth factor receptor (EGFR) signaling pathway. Diffusion of the complex E1-E2-EGFR-SCARB1-CD81 to the cell lateral membrane allows further interaction with Claudin 1 (CLDN1) and occludin (OCLN) to finally trigger HCV entry. Its function is as follows. Forms a heterodimer with envelope glycoprotein E1, which mediates virus attachment to the host cell, virion internalization through clathrin-dependent endocytosis and fusion with host membrane. Fusion with the host cell is most likely mediated by both E1 and E2, through conformational rearrangements of the heterodimer required for fusion rather than a classical class II fusion mechanism. The interaction between envelope glycoprotein E2 and host apolipoprotein E/APOE allows the proper assembly, maturation and infectivity of the viral particles. This interaction is probably promoted via the up-regulation of cellular autophagy by the virus. E1/E2 heterodimer binds host apolipoproteins such as APOB and APOE thereby forming a lipo-viro-particle (LVP). APOE associated to the LVP allows the initial virus attachment to cell surface receptors such as the heparan sulfate proteoglycans (HSPGs), syndecan-1 (SDC1), syndecan-1 (SDC2), the low-density lipoprotein receptor (LDLR) and scavenger receptor class B type I (SCARB1). The cholesterol transfer activity of SCARB1 allows E2 exposure and binding of E2 to SCARB1 and the tetraspanin CD81. E1/E2 heterodimer binding on CD81 activates the epithelial growth factor receptor (EGFR) signaling pathway. Diffusion of the complex E1-E2-EGFR-SCARB1-CD81 to the cell lateral membrane allows further interaction with Claudin 1 (CLDN1) and occludin (OCLN) to finally trigger HCV entry. Inhibits host EIF2AK2/PKR activation, preventing the establishment of an antiviral state. Viral ligand for CD209/DC-SIGN and CLEC4M/DC-SIGNR, which are respectively found on dendritic cells (DCs), and on liver sinusoidal endothelial cells and macrophage-like cells of lymph node sinuses. These interactions allow the capture of circulating HCV particles by these cells and subsequent facilitated transmission to permissive cells such as hepatocytes and lymphocyte subpopulations. In Hepatitis C virus (isolate HCT27) (HCV), this protein is Genome polyprotein.